The sequence spans 187 residues: GTP cyclohydrolase 1 (187 aa).

Residues cysteine 81, histidine 84, and cysteine 152 each contribute to the Zn(2+) site.

It belongs to the GTP cyclohydrolase I family. In terms of assembly, toroid-shaped homodecamer, composed of two pentamers of five dimers.

It catalyses the reaction GTP + H2O = 7,8-dihydroneopterin 3'-triphosphate + formate + H(+). Its pathway is cofactor biosynthesis; 7,8-dihydroneopterin triphosphate biosynthesis; 7,8-dihydroneopterin triphosphate from GTP: step 1/1. The protein is GTP cyclohydrolase 1 of Pyrobaculum aerophilum (strain ATCC 51768 / DSM 7523 / JCM 9630 / CIP 104966 / NBRC 100827 / IM2).